The following is a 587-amino-acid chain: Estrogen receptor (587 aa).

The interval 1 to 176 (MTLHTKTSGV…SMESTKETRY (176 aa)) is modulating (transactivation AF-1). NR C4-type zinc fingers lie at residues 177–197 (CAVCNDYASGYHYGVWSCEGC) and 213–237 (CPATNQCTIDKNRRKSCQACRLRKC). A DNA-binding region (nuclear receptor) is located at residues 177-242 (CAVCNDYASG…RLRKCYEVGM (66 aa)). Residues 243 to 302 (MKGGIRKDRRGGRVMKQKRQREEQDSRNGEASSTELRAPTLWASPLVVKHNKKNSPALSL) form a hinge region. Positions 248-277 (RKDRRGGRVMKQKRQREEQDSRNGEASSTE) are disordered. Basic residues predominate over residues 249 to 261 (KDRRGGRVMKQKR). The NR LBD domain maps to 303–539 (TAEQMVSALL…DLLLEMLDAH (237 aa)). The transactivation AF-2 stretch occupies residues 303–587 (TAEQMVSALL…KEEENMQNTL (285 aa)).

The protein belongs to the nuclear hormone receptor family. NR3 subfamily. As to quaternary structure, binds DNA as a homodimer. Can form a heterodimer with ER-beta.

It is found in the nucleus. Its function is as follows. The steroid hormones and their receptors are involved in the regulation of eukaryotic gene expression and affect cellular proliferation and differentiation in target tissues. In Taeniopygia guttata (Zebra finch), this protein is Estrogen receptor (ESR1).